The chain runs to 757 residues: RNA exonuclease 3 (757 aa).

2 disordered regions span residues 56-259 (VKRE…AEHL) and 474-590 (ESLD…CDQA). A compositionally biased stretch (basic and acidic residues) spans 120–132 (EGGRAEGAEKKEF). 3 stretches are compositionally biased toward polar residues: residues 145–172 (TPHASATPQASVSPQTSAPPQHVSSSVS), 202–223 (QPSSSREPPVSSIDTRTSSSPK), and 230–240 (MTTSASPSQSR). 2 stretches are compositionally biased toward low complexity: residues 244–253 (RNTSASPSSS) and 474–502 (ESLDTSTSTSTSTSATTSAPSAKSTKTAS). Over residues 503-516 (RPASTPTKSLTSSL) the composition is skewed to polar residues. Basic and acidic residues-rich tracts occupy residues 543–557 (REPDITLETMKRGIG) and 565–581 (SQERSSEPRERSARVRE). Residues 597–751 (VVAVDCEMLY…EDALAALDVV (155 aa)) form the Exonuclease domain.

It belongs to the REXO1/REXO3 family.

It localises to the cytoplasm. Its subcellular location is the nucleus. Functionally, 3' to 5' exoribonuclease required for proper 3' end maturation of MRP RNA and of the U5L snRNA. This is RNA exonuclease 3 (REX3) from Yarrowia lipolytica (strain CLIB 122 / E 150) (Yeast).